Consider the following 61-residue polypeptide: MARKALIEKWKKTPKYATKAYTRCRICGRPHAVLKKYGICRICFRELAYKGEIPGCKKASW.

Positions 24, 27, 40, and 43 each coordinate Zn(2+).

It belongs to the universal ribosomal protein uS14 family. Zinc-binding uS14 subfamily. As to quaternary structure, part of the 30S ribosomal subunit. Contacts proteins S3 and S10. Zn(2+) is required as a cofactor.

Its function is as follows. Binds 16S rRNA, required for the assembly of 30S particles and may also be responsible for determining the conformation of the 16S rRNA at the A site. This chain is Small ribosomal subunit protein uS14, found in Clostridium kluyveri (strain NBRC 12016).